The sequence spans 145 residues: Endoribonuclease YbeY (145 aa).

The Zn(2+) site is built by His109, His113, and His119.

The protein belongs to the endoribonuclease YbeY family. It depends on Zn(2+) as a cofactor.

It localises to the cytoplasm. Functionally, single strand-specific metallo-endoribonuclease involved in late-stage 70S ribosome quality control and in maturation of the 3' terminus of the 16S rRNA. The protein is Endoribonuclease YbeY of Vesicomyosocius okutanii subsp. Calyptogena okutanii (strain HA).